The chain runs to 605 residues: Indole-3-acetic acid-amido synthetase GH3.8 (605 aa).

Residues serine 115, 342–346 (MYASS), tyrosine 365, aspartate 421, and arginine 440 each bind AMP.

The protein belongs to the IAA-amido conjugating enzyme family. Expressed in the inner floral organs (lodicules, stamens and carpels) and at lower levels in lemmas and paleas.

Functionally, catalyzes the synthesis of indole-3-acetic acid (IAA)-amino acid conjugates, providing a mechanism for the plant to cope with the presence of excessive free auxin. Produces more IAA-Asp levels than IAA-Ala levels in vitro. May participate in the activation of disease resistance by preventing the accumulation of free IAA, which reduces the expression of a group of auxin-responsive genes encoding expansins that control cell wall loosening and expansion. Contributes to late events in stamen and carpel differentiation, and influences floret fertility. The polypeptide is Indole-3-acetic acid-amido synthetase GH3.8 (GH3.8) (Oryza sativa subsp. indica (Rice)).